The following is a 329-amino-acid chain: 4-hydroxythreonine-4-phosphate dehydrogenase (329 aa).

The substrate site is built by His137 and Thr138. 3 residues coordinate a divalent metal cation: His167, His212, and His267. Substrate-binding residues include Lys275, Asn284, and Arg293.

It belongs to the PdxA family. As to quaternary structure, homodimer. Requires Zn(2+) as cofactor. Mg(2+) serves as cofactor. Co(2+) is required as a cofactor.

The protein localises to the cytoplasm. It catalyses the reaction 4-(phosphooxy)-L-threonine + NAD(+) = 3-amino-2-oxopropyl phosphate + CO2 + NADH. It participates in cofactor biosynthesis; pyridoxine 5'-phosphate biosynthesis; pyridoxine 5'-phosphate from D-erythrose 4-phosphate: step 4/5. Functionally, catalyzes the NAD(P)-dependent oxidation of 4-(phosphooxy)-L-threonine (HTP) into 2-amino-3-oxo-4-(phosphooxy)butyric acid which spontaneously decarboxylates to form 3-amino-2-oxopropyl phosphate (AHAP). This chain is 4-hydroxythreonine-4-phosphate dehydrogenase, found in Stutzerimonas stutzeri (strain A1501) (Pseudomonas stutzeri).